The sequence spans 208 residues: Protein-L-isoaspartate O-methyltransferase (208 aa).

Ser59 is an active-site residue.

This sequence belongs to the methyltransferase superfamily. L-isoaspartyl/D-aspartyl protein methyltransferase family.

The protein localises to the cytoplasm. The enzyme catalyses [protein]-L-isoaspartate + S-adenosyl-L-methionine = [protein]-L-isoaspartate alpha-methyl ester + S-adenosyl-L-homocysteine. In terms of biological role, catalyzes the methyl esterification of L-isoaspartyl residues in peptides and proteins that result from spontaneous decomposition of normal L-aspartyl and L-asparaginyl residues. It plays a role in the repair and/or degradation of damaged proteins. The polypeptide is Protein-L-isoaspartate O-methyltransferase (Sodalis glossinidius (strain morsitans)).